We begin with the raw amino-acid sequence, 1043 residues long: Polycomb protein Pcl (1043 aa).

Disordered stretches follow at residues 1 to 34 (MMNN…SAPP), 271 to 302 (PDST…PLLA), 317 to 346 (FKTV…AAPS), and 395 to 422 (KLRK…NTSP). The segment covering 25–34 (PSTAVPSAPP) has biased composition (low complexity). Pro residues predominate over residues 324–344 (PPTPPTPPSPPPPPPAPPVAA). In terms of domain architecture, Tudor spans 349–404 (VTYALQEDVFIKCNDGRFYLGTIIDQTSDQYLIRFDDQSEQWCEPDKLRKLGGGSS). Residues 399–412 (LGGGSSITAGGGGA) show a composition bias toward gly residues. 2 PHD-type zinc fingers span residues 424 to 472 (GPMC…CAKP) and 512 to 560 (QIYC…VFCC). Basic and acidic residues predominate over residues 737–757 (AKKQAAQKADKHDELPLKPDL). 2 disordered regions span residues 737–819 (AKKQ…TSSL) and 931–985 (AKDL…PGHS). Positions 783–792 (SRKRKAFRLS) are enriched in basic residues. Over residues 793–804 (KRYDNSRNHCDL) the composition is skewed to basic and acidic residues. Serine 805 and serine 806 each carry phosphoserine. A compositionally biased stretch (low complexity) spans 807 to 819 (DENSSSSRGTSSL). A compositionally biased stretch (basic residues) spans 945–954 (THGRLLRQRP). Over residues 955–977 (QKQSPSQSRRNSTSSTATSSSSN) the composition is skewed to low complexity.

The protein belongs to the Polycomblike family. As to quaternary structure, component of a form of the Esc/E(z) complex present specifically during early embryogenesis which is composed of Caf1-55, esc, E(z), Su(z)12, Pcl and HDAC1/Rpd3. This complex is distinct from the PRC1 complex, which contains many other PcG proteins like Pc, Ph, Psc, Su(z)2. The two complexes however cooperate and interact together during the first 3 hours of development to establish PcG silencing. Interacts with corto in vitro.

It is found in the nucleus. It localises to the chromosome. Functionally, polycomb group (PcG) protein. While PcG proteins are generally required to maintain the transcriptionally repressive state of homeotic genes throughout development, this protein is specifically required during the first 6 hours of embryogenesis to establish the repressed state. Component of the Esc/E(z) complex, which methylates 'Lys-9' and 'Lys-27' residues of histone H3, leading to transcriptional repression of the affected target gene. The Esc/E(z) complex is necessary but not sufficient for the repression of homeotic target genes, suggesting that the recruitment of the distinct PRC1 complex is also required. Required for the correct spatial expression of the homeotic genes of the Antennapedia and Bithorax complexes. The sequence is that of Polycomb protein Pcl (Pcl) from Drosophila melanogaster (Fruit fly).